Reading from the N-terminus, the 466-residue chain is 3-isopropylmalate dehydratase large subunit (466 aa).

Cysteine 347, cysteine 407, and cysteine 410 together coordinate [4Fe-4S] cluster.

The protein belongs to the aconitase/IPM isomerase family. LeuC type 1 subfamily. In terms of assembly, heterodimer of LeuC and LeuD. [4Fe-4S] cluster is required as a cofactor.

It catalyses the reaction (2R,3S)-3-isopropylmalate = (2S)-2-isopropylmalate. The protein operates within amino-acid biosynthesis; L-leucine biosynthesis; L-leucine from 3-methyl-2-oxobutanoate: step 2/4. Functionally, catalyzes the isomerization between 2-isopropylmalate and 3-isopropylmalate, via the formation of 2-isopropylmaleate. In Solibacter usitatus (strain Ellin6076), this protein is 3-isopropylmalate dehydratase large subunit.